The chain runs to 284 residues: Signal peptidase I (284 aa).

The helical transmembrane segment at 4–22 (NFPLLLVIAVAVCGALALV) threads the bilayer. The Cytoplasmic segment spans residues 23-58 (DLVLFAPRRRAAISSYEGQVNEPDPAVLEKLNKEPL). The helical transmembrane segment at 59–77 (LVEYGKSFFPVLFIVLVLR) threads the bilayer. The Periplasmic segment spans residues 78–284 (SFLVEPFQIP…PNFSRVGVIH (207 aa)). Residues S90 and K145 contribute to the active site.

The protein belongs to the peptidase S26 family.

It localises to the cell inner membrane. The enzyme catalyses Cleavage of hydrophobic, N-terminal signal or leader sequences from secreted and periplasmic proteins.. The polypeptide is Signal peptidase I (lepB) (Pseudomonas aeruginosa (strain ATCC 15692 / DSM 22644 / CIP 104116 / JCM 14847 / LMG 12228 / 1C / PRS 101 / PAO1)).